Here is a 411-residue protein sequence, read N- to C-terminus: Arginase (411 aa).

Residues 83–106 form a disordered region; the sequence is NNYINNNDNNNDNNNDNNNDNNNN. Positions 193, 216, 218, and 220 each coordinate Mn(2+). L-arginine-binding residues include Asn-222, Ser-229, and Asp-274. 2 residues coordinate Mn(2+): Asp-323 and Asp-325.

It belongs to the arginase family. As to quaternary structure, homotrimer; oligomerization is dependent on Mn(2+) binding. The cofactor is Mn(2+).

It catalyses the reaction L-arginine + H2O = urea + L-ornithine. The protein operates within nitrogen metabolism; urea cycle; L-ornithine and urea from L-arginine: step 1/1. With respect to regulation, feedback inhibition by product L-ornithine,. Inhibited by 2(S)-amino-6-boronohexanoic acid (ABH); however, with less efficiency than human ARG1. In terms of biological role, catalyzes the hydrolysis of L-arginine into urea and L-ornithine, which is a precursor for polyamine biosynthesis. May play a role in parasite intra-hepatic development during the host liver stage. The protein is Arginase of Plasmodium falciparum (isolate 3D7).